The chain runs to 268 residues: Ribosomal RNA small subunit methyltransferase A (268 aa).

6 residues coordinate S-adenosyl-L-methionine: Asn-16, Leu-18, Gly-43, Glu-64, Asp-89, and Asn-110.

The protein belongs to the class I-like SAM-binding methyltransferase superfamily. rRNA adenine N(6)-methyltransferase family. RsmA subfamily.

It localises to the cytoplasm. It catalyses the reaction adenosine(1518)/adenosine(1519) in 16S rRNA + 4 S-adenosyl-L-methionine = N(6)-dimethyladenosine(1518)/N(6)-dimethyladenosine(1519) in 16S rRNA + 4 S-adenosyl-L-homocysteine + 4 H(+). Its function is as follows. Specifically dimethylates two adjacent adenosines (A1518 and A1519) in the loop of a conserved hairpin near the 3'-end of 16S rRNA in the 30S particle. May play a critical role in biogenesis of 30S subunits. The chain is Ribosomal RNA small subunit methyltransferase A from Pseudomonas aeruginosa (strain ATCC 15692 / DSM 22644 / CIP 104116 / JCM 14847 / LMG 12228 / 1C / PRS 101 / PAO1).